The following is a 194-amino-acid chain: MSTASVLDDIDYDSSFEMVEEEKFEKIENTDNSENFQYVSTKGNTVKEVNINSNEKKKKEAPIQILTAMIGKWKLASSENLQEYFTLEKFPEITQMAWEHGITCYKMNGNQLHVHTDLLGKSLIPTIFEFDKPIARDDNAVSTHAEGNMMSTICKRIADGSIVWKVERLIKNGNLVVFNSRGNFRCKRVYKRVN.

The protein belongs to the calycin superfamily. Fatty-acid binding protein (FABP) family.

This is an uncharacterized protein from Caenorhabditis elegans.